The following is a 384-amino-acid chain: DNA dC-&gt;dU-editing enzyme APOBEC-3G (384 aa).

Positions 1 to 60 (MTPQFRNTVERMYRDTFSYNFNNRPILSRRNTVWLCYEVKTKDPSRPPLDAKIFRGQVYS) are essential for cytoplasmic localization. 2 consecutive CMP/dCMP-type deaminase domains span residues 29–138 (RRNT…LRSL) and 214–328 (GRHE…LRTL). T32 bears the Phosphothreonine; by PKA mark. Zn(2+)-binding residues include H65, C97, and C100. A necessary for homooligomerization region spans residues 209–336 (EHWVRGRHET…TLAEAGAKIS (128 aa)). The interval 213–215 (RGR) is interaction with DNA. A Phosphothreonine; by PKA and CAMK2 modification is found at T218. Residue H257 participates in Zn(2+) binding. The Proton donor role is filled by E259. Zn(2+)-binding residues include C288 and C291. An interaction with DNA region spans residues 313 to 320 (RIYDDQGR).

The protein belongs to the cytidine and deoxycytidylate deaminase family. In terms of assembly, homodimer. Homooligomer. Can bind RNA to form ribonucleoprotein complexes of high-molecular-mass (HMM) or low-molecular-mass (LMM). HMM is inactive and heterogeneous in protein composition because of binding nonselectively to cellular RNAs, which in turn are associated with variety of cellular proteins. The LMM form which is enzymatically active has few or no RNAs associated. Its ability to form homooligomer is distinct from its ability to assemble into HMM. Interacts with APOBEC3B, APOBEC3F, MOV10, AGO2, EIF4E, EIF4ENIF1, DCP2 and DDX6 in an RNA-dependent manner. Interacts with AGO1, AGO3 and PKA/PRKACA. Zn(2+) serves as cofactor.

The protein resides in the cytoplasm. Its subcellular location is the nucleus. It localises to the P-body. It catalyses the reaction a 2'-deoxycytidine in single-stranded DNA + H2O + H(+) = a 2'-deoxyuridine in single-stranded DNA + NH4(+). Functionally, DNA deaminase (cytidine deaminase) which acts as an inhibitor of retrovirus replication and retrotransposon mobility. After the penetration of retroviral nucleocapsids into target cells of infection and the initiation of reverse transcription, it can induce the conversion of cytosine to uracil in the minus-sense single-strand viral DNA, leading to G-to-A hypermutations in the subsequent plus-strand viral DNA. The resultant detrimental levels of mutations in the proviral genome, along with a deamination-independent mechanism that works prior to the proviral integration, together exert efficient antiretroviral effects in infected target cells. Selectively targets single-stranded DNA and does not deaminate double-stranded DNA or single- or double-stranded RNA. This chain is DNA dC-&gt;dU-editing enzyme APOBEC-3G (APOBEC3G), found in Gorilla gorilla gorilla (Western lowland gorilla).